We begin with the raw amino-acid sequence, 397 residues long: Enoyl-[acyl-carrier-protein] reductase [NADH] (397 aa).

NAD(+) contacts are provided by residues 48–53 (GASTGY), 74–75 (FE), 111–112 (DA), and 139–140 (LA). Substrate is bound at residue tyrosine 225. Tyrosine 235 (proton donor) is an active-site residue. NAD(+) is bound by residues lysine 244 and 273-275 (VVT).

This sequence belongs to the TER reductase family. Monomer.

It catalyses the reaction a 2,3-saturated acyl-[ACP] + NAD(+) = a (2E)-enoyl-[ACP] + NADH + H(+). It participates in lipid metabolism; fatty acid biosynthesis. Involved in the final reduction of the elongation cycle of fatty acid synthesis (FAS II). Catalyzes the reduction of a carbon-carbon double bond in an enoyl moiety that is covalently linked to an acyl carrier protein (ACP). In Pseudoalteromonas translucida (strain TAC 125), this protein is Enoyl-[acyl-carrier-protein] reductase [NADH].